The primary structure comprises 461 residues: MNDQYHRAARDGYLELLKEATRKELNAPDEDGMTPTLWAAYHGNLESLRLIVSRGGDPDKCDIWGNTPLHLAASNGHLHCLSFLVSFGANIWCLDNDYHTPLDMAAMKGHMECVRYLDSIAAKQSSLNPKLVGKLKDKAFREAERRIRECAKLQRRHHERMERRYRRELAERSDTLSFSSLTSSTLSRRLQHLALGSHLPYSQATLHGTARGKTKMQKKLERRKQGGEGTFKVSEDGRKSARSLSGLQLGSDVMFVRQGTYANPKEWGRAPLRDMFLSDEDSVSRATLAAEPAHSEVSTDSGHDSLFTRPGLGTMVFRRNYLSSGLHGLGREDGGLDGVGAPRGRLQSSPSLDDDSLGSANSLQDRSCGEELPWDELDLGLDEDLEPETSPLETFLASLHMEDFAALLRQEKIDLEALMLCSDLDLRSISVPLGPRKKILGAVRRRRQAMERPPALEDTEL.

ANK repeat units lie at residues 31–60 (DGMTPTLWAAYHGNLESLRLIVSRGGDPDK), 64–93 (WGNTPLHLAASNGHLHCLSFLVSFGANIWC), and 97–126 (DYHTPLDMAAMKGHMECVRYLDSIAAKQSS). Disordered regions lie at residues 208–243 (GTARGKTKMQKKLERRKQGGEGTFKVSEDGRKSARS) and 332–368 (EDGGLDGVGAPRGRLQSSPSLDDDSLGSANSLQDRSC). Residues 210 to 222 (ARGKTKMQKKLER) are compositionally biased toward basic residues. In terms of domain architecture, SAM spans 385-447 (LEPETSPLET…KILGAVRRRR (63 aa)). S422 carries the post-translational modification Phosphoserine; by CK2.

In terms of assembly, part of a complex composed of USH1C, USH1G and MYO7A. Interacts with USH1C (via the first PDZ domain). Interacts with PDZD7. Interacts with CDH23 and PCDH15; these interactions may recruit USH1G to the plasma membrane. Interacts with intraflagellar transport proteins IFT20, IFT52 and IFT57. Interacts with splicing factors SF3B1, PRPF6, PRPF31 and SON. Interacts with the U4/U6.U5 tri-small nuclear ribonucleoprotein (tri-snRNP) complex in the presence of pre-mRNAs. Interacts (via SAM domain) with MAGI2 (via PDZ 6 domain); the interaction is triggered by phosphorylation of USH1G by CK2 and negatively regulates MAGI2-mediated endocytosis. As to expression, expressed in vestibule of the inner ear, eye and small intestine.

Its subcellular location is the cytoplasm. It is found in the cytosol. It localises to the cytoskeleton. The protein resides in the cell membrane. The protein localises to the cell projection. Its subcellular location is the cilium. It is found in the nucleus speckle. It localises to the nucleus. The protein resides in the cajal body. The protein localises to the microtubule organizing center. Its subcellular location is the centrosome. It is found in the photoreceptor inner segment. Plays a role in pre-mRNA splicing by regulating the release and transfer of U4/U6.U5 tri-small nuclear ribonucleoprotein (tri-snRNP) complexes from their assembly site in Cajal bodies to nuclear speckles, thereby contributing to the assembly of the pre-catalytic spliceosome on target pre-mRNAs. May also participate in recycling of snRNPs back to Cajal bodies during splicing. Plays a role in regulating MAGI2-mediated endocytosis. Anchoring/scaffolding protein that is a part of the functional network formed by USH1C, USH1G, CDH23 and MYO7A that mediates mechanotransduction in cochlear hair cells. Required for normal development and maintenance of cochlear hair cell bundles. Required for normal hearing. The protein is pre-mRNA splicing regulator USH1G (USH1G) of Homo sapiens (Human).